The primary structure comprises 186 residues: Ribosome-recycling factor (186 aa).

The protein belongs to the RRF family.

It localises to the cytoplasm. In terms of biological role, responsible for the release of ribosomes from messenger RNA at the termination of protein biosynthesis. May increase the efficiency of translation by recycling ribosomes from one round of translation to another. This is Ribosome-recycling factor from Chelativorans sp. (strain BNC1).